Reading from the N-terminus, the 205-residue chain is Cell wall / vacuolar inhibitor of fructosidase 1 (205 aa).

A signal peptide spans 1-23 (MKMMKVMMLIVMMMMVMVMVSEG). Disulfide bonds link Cys30-Cys39 and Cys93-Cys134. Asn139 and Asn156 each carry an N-linked (GlcNAc...) asparagine glycan.

The protein belongs to the PMEI family. Mostly expressed in roots, senescent leaves and flowers (in sepals), and, to a lower extent, in stems, specifically in the vascular tissues (e.g. in the phloem).

It is found in the vacuole. Inhibits fructosidases from vacuoles (vacuolar invertase VI). The protein is Cell wall / vacuolar inhibitor of fructosidase 1 (C/VIF1) of Arabidopsis thaliana (Mouse-ear cress).